Consider the following 204-residue polypeptide: Imidazoleglycerol-phosphate dehydratase (204 aa).

Belongs to the imidazoleglycerol-phosphate dehydratase family.

The protein localises to the cytoplasm. The enzyme catalyses D-erythro-1-(imidazol-4-yl)glycerol 3-phosphate = 3-(imidazol-4-yl)-2-oxopropyl phosphate + H2O. The protein operates within amino-acid biosynthesis; L-histidine biosynthesis; L-histidine from 5-phospho-alpha-D-ribose 1-diphosphate: step 6/9. The protein is Imidazoleglycerol-phosphate dehydratase of Corynebacterium urealyticum (strain ATCC 43042 / DSM 7109).